Here is a 241-residue protein sequence, read N- to C-terminus: Putative integrase ORF241 (241 aa).

Residues 82-241 (VEAKKTLVSA…AIEMLRKLAD (160 aa)) enclose the Tyr recombinase domain. Active-site residues include Arg-119, Lys-144, His-191, Arg-194, and His-217. The active-site O-(3'-phospho-DNA)-tyrosine intermediate is the Tyr-226.

It belongs to the 'phage' integrase family.

Its function is as follows. This protein may encode an integrase, which is necessary for integration of the viral DNA into host genome. The sequence is that of Putative integrase ORF241 from Acidianus convivator (ATV).